The chain runs to 247 residues: MLRLYFVALQFLAIIPIPFSFRCREEDLGRSMSFFPLVGLTLGLLLAGCDYLLALALPRPVADLLLVAILALVTGALHLDGLADVCDGLAARGGRERFLAVMKDSRVGAVGVVGLVLALLLKYQALFAVTTDKWETLLFFPMVARFSQVQLTVGSKRARQDGLGSLFIGGAGSMQVAVAAFFTVVTGWLLLGLPGIGCAAVCSLFTCLAKAWFHRKLGGITGDAIGCVSELNEILCLMTLVAIGGRF.

5 helical membrane-spanning segments follow: residues 1–21 (MLRL…PFSF), 37–57 (LVGL…ALAL), 61–81 (VADL…HLDG), 109–129 (AVGV…LFAV), and 176–196 (VAVA…LPGI).

It belongs to the CobS family. Requires Mg(2+) as cofactor.

The protein resides in the cell inner membrane. The catalysed reaction is alpha-ribazole + adenosylcob(III)inamide-GDP = adenosylcob(III)alamin + GMP + H(+). It catalyses the reaction alpha-ribazole 5'-phosphate + adenosylcob(III)inamide-GDP = adenosylcob(III)alamin 5'-phosphate + GMP + H(+). It participates in cofactor biosynthesis; adenosylcobalamin biosynthesis; adenosylcobalamin from cob(II)yrinate a,c-diamide: step 7/7. Its function is as follows. Joins adenosylcobinamide-GDP and alpha-ribazole to generate adenosylcobalamin (Ado-cobalamin). Also synthesizes adenosylcobalamin 5'-phosphate from adenosylcobinamide-GDP and alpha-ribazole 5'-phosphate. The chain is Adenosylcobinamide-GDP ribazoletransferase from Geotalea daltonii (strain DSM 22248 / JCM 15807 / FRC-32) (Geobacter daltonii).